Consider the following 609-residue polypeptide: Proline--tRNA ligase (609 aa).

It belongs to the class-II aminoacyl-tRNA synthetase family. ProS type 1 subfamily. Homodimer.

The protein resides in the cytoplasm. The catalysed reaction is tRNA(Pro) + L-proline + ATP = L-prolyl-tRNA(Pro) + AMP + diphosphate. Catalyzes the attachment of proline to tRNA(Pro) in a two-step reaction: proline is first activated by ATP to form Pro-AMP and then transferred to the acceptor end of tRNA(Pro). As ProRS can inadvertently accommodate and process non-cognate amino acids such as alanine and cysteine, to avoid such errors it has two additional distinct editing activities against alanine. One activity is designated as 'pretransfer' editing and involves the tRNA(Pro)-independent hydrolysis of activated Ala-AMP. The other activity is designated 'posttransfer' editing and involves deacylation of mischarged Ala-tRNA(Pro). The misacylated Cys-tRNA(Pro) is not edited by ProRS. This chain is Proline--tRNA ligase, found in Synechococcus sp. (strain JA-3-3Ab) (Cyanobacteria bacterium Yellowstone A-Prime).